Reading from the N-terminus, the 334-residue chain is Glycerol-3-phosphate dehydrogenase [NAD(P)+] (334 aa).

NADPH-binding residues include Trp-13, Arg-33, and Lys-106. The sn-glycerol 3-phosphate site is built by Lys-106, Gly-137, and Ser-139. NADPH is bound at residue Ala-141. Residues Lys-192, Asp-245, Ser-255, Arg-256, and Asn-257 each contribute to the sn-glycerol 3-phosphate site. Lys-192 functions as the Proton acceptor in the catalytic mechanism. NADPH is bound at residue Arg-256. NADPH-binding residues include Val-280 and Glu-282.

It belongs to the NAD-dependent glycerol-3-phosphate dehydrogenase family.

The protein localises to the cytoplasm. The enzyme catalyses sn-glycerol 3-phosphate + NAD(+) = dihydroxyacetone phosphate + NADH + H(+). The catalysed reaction is sn-glycerol 3-phosphate + NADP(+) = dihydroxyacetone phosphate + NADPH + H(+). It participates in membrane lipid metabolism; glycerophospholipid metabolism. Catalyzes the reduction of the glycolytic intermediate dihydroxyacetone phosphate (DHAP) to sn-glycerol 3-phosphate (G3P), the key precursor for phospholipid synthesis. The polypeptide is Glycerol-3-phosphate dehydrogenase [NAD(P)+] (Chlamydia muridarum (strain MoPn / Nigg)).